The following is a 416-amino-acid chain: Glutamyl-tRNA reductase 1 (416 aa).

Residues 57–60, Ser-113, 118–120, and Gln-124 contribute to the substrate site; these read TCNR and DFE. Cys-58 acts as the Nucleophile in catalysis. 193-198 serves as a coordination point for NADP(+); the sequence is GTGKIG.

Belongs to the glutamyl-tRNA reductase family. Homodimer.

The catalysed reaction is (S)-4-amino-5-oxopentanoate + tRNA(Glu) + NADP(+) = L-glutamyl-tRNA(Glu) + NADPH + H(+). It participates in porphyrin-containing compound metabolism; protoporphyrin-IX biosynthesis; 5-aminolevulinate from L-glutamyl-tRNA(Glu): step 1/2. Catalyzes the NADPH-dependent reduction of glutamyl-tRNA(Glu) to glutamate 1-semialdehyde (GSA). This chain is Glutamyl-tRNA reductase 1, found in Flavobacterium johnsoniae (strain ATCC 17061 / DSM 2064 / JCM 8514 / BCRC 14874 / CCUG 350202 / NBRC 14942 / NCIMB 11054 / UW101) (Cytophaga johnsonae).